A 112-amino-acid chain; its full sequence is Putative pterin-4-alpha-carbinolamine dehydratase (112 aa).

The protein belongs to the pterin-4-alpha-carbinolamine dehydratase family.

The enzyme catalyses (4aS,6R)-4a-hydroxy-L-erythro-5,6,7,8-tetrahydrobiopterin = (6R)-L-erythro-6,7-dihydrobiopterin + H2O. The protein is Putative pterin-4-alpha-carbinolamine dehydratase of Syntrophotalea carbinolica (strain DSM 2380 / NBRC 103641 / GraBd1) (Pelobacter carbinolicus).